We begin with the raw amino-acid sequence, 948 residues long: MNLGDGLKLETELLDGKTKLILSPYEHKSKISVKMGNKAKIAKCPLRTKTGHILKSTQDTCIGSEKLLQKKPVGSETSQAKGEKNGMTFSSTKDLCKQCIDKDCLHIQKEISPATPNMQKTRNTVNTSLVGKQKPHKKHITAENMKSSLVCLTQDQLQQILMTVNQGNRSLSLTENGKEAKSQYSLYLNSISNQPKDENIMGLFKKTEMVSSVPAENKSVLNEHQETSKQCEQKIAIENEWKPADIFSTLGERECDRSSLEAKKAQWRKELDEQVALKKKEKEVSEKWNDPWKKSESDKIIWEKHQILDQSRETVLLEHPFSAVKQELQRKWIEELNKQIEDDRQRKIEEKIIYSKGEEHDRWAMHFDSLKSYPGSQSQLFSQSTHKQPEYFCVSPDTQELADVSSVCTPTTGSQVEPSEEEHIAKPIKDVVMANSKKTNFLRSMTALLDPAQIEERDRRRQKQLEHQKAITAQVEEKRRKKQLEEEQRKKEEQEEELRLAQEREEMQKQYEEDILKQKQKEEIMTLKTNELFQTMQRAQELAQRLKQEQRIRELAQKGHDTSRLIKNLGVDTIQMEYNASNISNSRHDSDEISGKMNTYMNSTTSKKDTGVQTDDLNIGIFTNAESHCGSLMERDITNCSSPEISAELIGQFSTKKNKQELTQDKGASLEKENNRCNDQCNQFTRIEKQTKHMKKYPKRPDWNINKPPKRYIPASEKYPKQLQKQREEKKVRRQMELLHLVEKNNPGHLSQNRGISPEIFHSSHQETESKLRWHLVKKEEEPLNIHSFSKERSPSSPVPVVKNRTQQTQNTLHLPLKNSSYERENLISGSNQTELSSGISESSHFIPYVRTNEIYYLDPDAPLSGPSTQDPQYQNSQDCGQKRQLFDSDCVRDPLLNPNMVKNRDRQQAILKGLSELRQGLLQKQKELESSLLPLAENQEESFGSSF.

Thr-115 and Thr-121 each carry phosphothreonine. Position 369 is a phosphoserine (Ser-369). Positions 458–499 (DRRRQKQLEHQKAITAQVEEKRRKKQLEEEQRKKEEQEEELR) are disordered. Residues 467–558 (HQKAITAQVE…EQRIRELAQK (92 aa)) are a coiled coil. The mediates localization to cilia, centrosomes and spindle microtubules and the interaction with PCM1, CEP290, CEP104 and CSPP1 stretch occupies residues 570-948 (GVDTIQMEYN…NQEESFGSSF (379 aa)). Ser-606 bears the Phosphoserine mark. 2 disordered regions span residues 690–713 (QTKHMKKYPKRPDWNINKPPKRYI) and 788–808 (SFSKERSPSSPVPVVKNRTQQ).

Homodimer; disulfide-linked. Interacts with CEP290. Interacts with PCM1. Interacts with ARMC9, TOGARAM1, CSPP1 and CEP104. Interacts with CDK5RAP2, CEP152, CEP192, TBG1 and PRC1. As to expression, widely expressed (at protein level). Expressed in retina, mainly in photoreceptors but also in outer plexiform and ganglion cell layers (at protein level).

Its subcellular location is the cytoplasm. The protein localises to the cytoskeleton. It is found in the microtubule organizing center. It localises to the centrosome. The protein resides in the centriolar satellite. Its subcellular location is the cell projection. The protein localises to the cilium. It is found in the cilium basal body. It localises to the cilium axoneme. The protein resides in the photoreceptor inner segment. Its subcellular location is the photoreceptor outer segment. The protein localises to the spindle. It is found in the midbody. Its function is as follows. Microtubule-binding protein required for ciliogenesis. May function in ciliogenesis by mediating the transport of proteins like BBS4 to the cilium, but also through the organization of the centriolar satellites. Required for the assembly of signaling-competent cilia with proper structure and length. Mediates this function in part by regulating transition zone assembly and basal body recruitment of the IFT-B complex. Cooperates with the ciliopathy proteins CSPP1 and CEP104 during cilium length regulation. Plays two important roles during cell division. First, is required for mitotic progression via regulation of spindle assembly, organization and orientation, levels of spindle microtubules (MTs), kinetochore-fiber integrity, and chromosome alignment. Second, functions during cytokinesis in part by regulating assembly and organization of central spindle and midbody MTs. Plays a role in retina morphogenesis and/or homeostasis. The protein is Coiled-coil domain-containing protein 66 of Homo sapiens (Human).